The chain runs to 223 residues: ATP-dependent dethiobiotin synthetase BioD (223 aa).

ATP is bound at residue D11–Y16. T15 contributes to the Mg(2+) binding site. K36 is an active-site residue. Residue T40 coordinates substrate. ATP is bound by residues D50, E110 to G113, and N174 to N175. Mg(2+)-binding residues include D50 and E110.

This sequence belongs to the dethiobiotin synthetase family. Homodimer. Mg(2+) is required as a cofactor.

The protein localises to the cytoplasm. It catalyses the reaction (7R,8S)-7,8-diammoniononanoate + CO2 + ATP = (4R,5S)-dethiobiotin + ADP + phosphate + 3 H(+). Its pathway is cofactor biosynthesis; biotin biosynthesis; biotin from 7,8-diaminononanoate: step 1/2. Its function is as follows. Catalyzes a mechanistically unusual reaction, the ATP-dependent insertion of CO2 between the N7 and N8 nitrogen atoms of 7,8-diaminopelargonic acid (DAPA, also called 7,8-diammoniononanoate) to form a ureido ring. The chain is ATP-dependent dethiobiotin synthetase BioD from Staphylococcus epidermidis (strain ATCC 35984 / DSM 28319 / BCRC 17069 / CCUG 31568 / BM 3577 / RP62A).